The chain runs to 732 residues: Catalase-peroxidase (732 aa).

Positions 1-20 (MDKDSKRPVVGSTVRGGMSN) are disordered. The tryptophyl-tyrosyl-methioninium (Trp-Tyr) (with M-246) cross-link spans 92-220 (WHSAGTYRMG…LAAVQMGLIY (129 aa)). His-93 (proton acceptor) is an active-site residue. A cross-link (tryptophyl-tyrosyl-methioninium (Tyr-Met) (with W-92)) is located at residues 220 to 246 (YVNPEGPDGNPDPVAAGYDVIETFARM). Position 261 (His-261) interacts with heme b.

The protein belongs to the peroxidase family. Peroxidase/catalase subfamily. In terms of assembly, homodimer or homotetramer. Heme b is required as a cofactor. Post-translationally, formation of the three residue Trp-Tyr-Met cross-link is important for the catalase, but not the peroxidase activity of the enzyme.

The enzyme catalyses H2O2 + AH2 = A + 2 H2O. The catalysed reaction is 2 H2O2 = O2 + 2 H2O. Functionally, bifunctional enzyme with both catalase and broad-spectrum peroxidase activity. This Desulfosudis oleivorans (strain DSM 6200 / JCM 39069 / Hxd3) (Desulfococcus oleovorans) protein is Catalase-peroxidase.